Reading from the N-terminus, the 305-residue chain is Ribosomal RNA small subunit methyltransferase H (305 aa).

S-adenosyl-L-methionine contacts are provided by residues 49–51 (GGH), D68, F100, D116, and Q123.

This sequence belongs to the methyltransferase superfamily. RsmH family.

Its subcellular location is the cytoplasm. The catalysed reaction is cytidine(1402) in 16S rRNA + S-adenosyl-L-methionine = N(4)-methylcytidine(1402) in 16S rRNA + S-adenosyl-L-homocysteine + H(+). Functionally, specifically methylates the N4 position of cytidine in position 1402 (C1402) of 16S rRNA. This chain is Ribosomal RNA small subunit methyltransferase H, found in Synechocystis sp. (strain ATCC 27184 / PCC 6803 / Kazusa).